A 114-amino-acid polypeptide reads, in one-letter code: Large ribosomal subunit protein eL30 (114 aa).

It belongs to the eukaryotic ribosomal protein eL30 family.

This is Large ribosomal subunit protein eL30 (RPL30) from Branchiostoma belcheri (Amphioxus).